We begin with the raw amino-acid sequence, 300 residues long: Glutamyl-Q tRNA(Asp) synthetase (300 aa).

L-glutamate contacts are provided by residues 8–12 (RFAPT) and Asp-44. The 'HIGH' region motif lies at 11-21 (PTPSGDLHLGS). Zn(2+) is bound by residues Cys-100, Cys-102, Tyr-122, and Cys-126. 2 residues coordinate L-glutamate: Tyr-181 and Arg-199. A 'KMSKS' region motif is present at residues 237 to 241 (KLSKQ). Lys-240 contacts ATP.

It belongs to the class-I aminoacyl-tRNA synthetase family. GluQ subfamily. Zn(2+) is required as a cofactor.

Its function is as follows. Catalyzes the tRNA-independent activation of glutamate in presence of ATP and the subsequent transfer of glutamate onto a tRNA(Asp). Glutamate is transferred on the 2-amino-5-(4,5-dihydroxy-2-cyclopenten-1-yl) moiety of the queuosine in the wobble position of the QUC anticodon. The sequence is that of Glutamyl-Q tRNA(Asp) synthetase from Synechococcus sp. (strain ATCC 27144 / PCC 6301 / SAUG 1402/1) (Anacystis nidulans).